A 354-amino-acid chain; its full sequence is Interferon-inducible protein AIM2 (354 aa).

Residues 1 to 87 (MESEYREMLL…ANALEEKKKE (87 aa)) form the Pyrin domain. The segment at 95–124 (NTKKRGTQKVENRSQAENCSAASATRSDND) is disordered. Over residues 109 to 120 (QAENCSAASATR) the composition is skewed to polar residues. The region spanning 144-341 (MVAEQEAIRE…SGPCSFFKVI (198 aa)) is the HIN-200 domain.

It belongs to the HIN-200 family. In terms of assembly, self-associates; forms homooligomers in response to cytosolic double-stranded DNA (dsDNA) and the dsDNA seems to serve as oligomerization platform. Component of AIM2 inflammasome, which consists of a signal sensor component (AIM2), an adapter (PYCARD/ASC), which recruits an effector pro-inflammatory caspase (CASP1). Interacts (via pyrin domain) with PYCARD/ASC (via pyrin domain); interaction is direct. Component of the AIM2 PANoptosome complex, a multiprotein complex that drives inflammatory cell death (PANoptosis). Interacts with EIF2AK2/PKR. Interacts with MAPRE1. Interacts (via HIN-200 domain) with IFI202 (via HIN-200 domain 2); preventing activation of the AIM2 inflammasome. Interacts with RACK1; promoting association with PP2A phosphatase and dephosphorylation of AKT1. Interacts with TRIM11; promoting AIM2 recruitment to autophagosomes and autophagy-dependent degradation. Degraded via selective autophagy following interaction with TRIM11. Expressed in developing neurons. Highly expressed in regulatory T-cells (Treg).

Its subcellular location is the cytoplasm. The protein resides in the inflammasome. The protein localises to the nucleus. Its activity is regulated as follows. Inactive in absence of double-stranded DNA (dsDNA). Homooligomerizes upon binding to dsDNA, dsDNA serving as an oligomerization platform. AIM2 requires large dsDNA to generate a structural template that couples dsDNA ligand-binding and homooligomerization. Homooligomerization is followed by recruitment of PYCARD/ASC to initiate speck formation (nucleation). AIM2 and PYCARD/ASC homooligomer filaments assemble bidirectionally and the recognition between AIM2 and PYCARD/ASC oligomers occurs in a head-to-tail manner. Clustered PYCARD/ASC nucleates the formation of CASP1 filaments through the interaction of their respective CARD domains, acting as a platform for CASP1 polymerization and activation. Active CASP1 then specifically processes protein precursors, such as gasdermin-D (GSDMD), IL1B and IL18, leading to the release of mature cytokines in the extracellular milieu or pyroptosis, depending on cell type. AIM2 can be activated in response to events that cause genomic DNA (HIV protease inhibitor nelfinavir) or mitochondrial DNA release in the cytoplasm (such as Perfluoroalkyl substance pollutants or cholesterol overload). Activation of the AIM2 inflammasome is inhibited by IFI202. Activation of the AIM2 inflammasome is inhibited by TRIM11, which promotes autophagy-dependent degradation of AIM2. Sensor component of the AIM2 inflammasome, which mediates inflammasome activation in response to the presence of double-stranded DNA (dsDNA) in the cytosol, leading to subsequent pyroptosis. Inflammasomes are supramolecular complexes that assemble in the cytosol in response to pathogens and other damage-associated signals and play critical roles in innate immunity and inflammation. Acts as a recognition receptor (PRR): specifically recognizes and binds dsDNA in the cytosol, and mediates the formation of the inflammasome polymeric complex composed of AIM2, CASP1 and PYCARD/ASC. Recruitment of pro-caspase-1 (proCASP1) to the AIM2 inflammasome promotes caspase-1 (CASP1) activation, which subsequently cleaves and activates inflammatory cytokines IL1B and IL18 and gasdermin-D (GSDMD), promoting cytokine secretion. In some cells, CASP1 activation mediates cleavage and activation of GSDMD, triggering pyroptosis without promoting cytokine secretion. Detects cytosolic dsDNA of viral and bacterial origin in a non-sequence-specific manner. Involved in the DNA damage response caused by acute ionizing radiation by mediating pyroptosis of intestinal epithelial cells and bone marrow cells in response to double-strand DNA breaks. Mechanistically, AIM2 senses DNA damage in the nucleus to mediate inflammasome assembly and inflammatory cell death. Also acts as a regulator of neurodevelopment via its role in the DNA damage response: acts by promoting neural cell death in response to DNA damage in the developing brain, thereby purging genetically compromised cells of the central nervous system. Pyroptosis mediated by the AIM2 inflammasome in response to DNA damage is dependent on GSDMD without involving IL1B and IL18 cytokine secretion. Also acts as a mediator of pyroptosis, necroptosis and apoptosis (PANoptosis), an integral part of host defense against pathogens, in response to bacterial infection. Can also trigger PYCARD/ASC-dependent, caspase-1-independent cell death that involves caspase-8 (CASP8). In terms of biological role, also acts as a tumor suppressor independently of its role in inflammatory response. Able to suppress overt cell proliferation in enterocytes: restricts stem cell proliferation in the intestinal mucosa in an inflammasome-independent manner, contributing to a decrease in the likelihood of colorectal cancer development. AIM2 suppresses cell proliferation by inhibiting phosphorylation of AKT1 at 'Ser-473', preventing AKT1 activation and AKT-mTOR signaling pathway. Inhibits AKT1 phosphorylation both by inhibiting the activity of PRKDC/DNA-PK kinase and promoting dephosphorylation by PP2A phosphatase. Also acts as a key regulator of regulatory T-cells (Treg) homeostasis by promoting their stability: acts by preventing AKT1 activation. Its role in Treg homeostasis is important to restain autoimmune diseases. The sequence is that of Interferon-inducible protein AIM2 from Mus musculus (Mouse).